A 559-amino-acid polypeptide reads, in one-letter code: Glycerol kinase (559 aa).

T20 is a binding site for ADP. 3 residues coordinate ATP: T20, S21, and S22. A sn-glycerol 3-phosphate-binding site is contributed by T20. R24 is an ADP binding site. Residues R94, E95, and Y148 each contribute to the sn-glycerol 3-phosphate site. Glycerol contacts are provided by R94, E95, and Y148. Residue G252 coordinates beta-D-fructose 1,6-bisphosphate. A sn-glycerol 3-phosphate-binding site is contributed by D265. 2 residues coordinate glycerol: D265 and Q266. Positions 287, 332, 433, and 437 each coordinate ADP. 3 residues coordinate ATP: T287, G332, and G433. Residues I532 to A552 traverse the membrane as a helical segment.

The protein belongs to the FGGY kinase family. As to expression, widely expressed in fetal and adult tissues. In terms of tissue distribution, the sole isoform expressed in adult liver and kidney.

The protein localises to the mitochondrion outer membrane. It is found in the nucleus. It localises to the cytoplasm. The protein resides in the cytosol. The catalysed reaction is glycerol + ATP = sn-glycerol 3-phosphate + ADP + H(+). It functions in the pathway polyol metabolism; glycerol degradation via glycerol kinase pathway; sn-glycerol 3-phosphate from glycerol: step 1/1. Its activity is regulated as follows. Potassium and magnesium-dependent. In terms of biological role, kinase that plays a key role in glycerol metabolism, catalyzing its phosphorylation to produce sn-glycerol 3-phosphate. Sn-glycerol 3-phosphate is a crucial intermediate in various metabolic pathways, such as the synthesis of glycerolipids and triglycerides, glycogenesis, glycolysis and gluconeogenesis. This Homo sapiens (Human) protein is Glycerol kinase.